Here is a 112-residue protein sequence, read N- to C-terminus: uncharacterized protein (112 aa).

Positions 90–112 are disordered; the sequence is KNFNNSKNDQIKKKKIDNNQVNL.

This is an uncharacterized protein from Buchnera aphidicola subsp. Acyrthosiphon pisum (strain APS) (Acyrthosiphon pisum symbiotic bacterium).